Reading from the N-terminus, the 930-residue chain is Vacuolar membrane protease (930 aa).

The segment at 1–28 is disordered; it reads MPQEEVHDTSSVSDDNLTNTGGGGSNYY. The Cytoplasmic portion of the chain corresponds to 1–49; it reads MPQEEVHDTSSVSDDNLTNTGGGGSNYYNSHNQPNVFVRAIRSIFGYRK. A helical transmembrane segment spans residues 50–70; sequence TSLTLFVILTIIFTIALSLYD. Residues 71–379 lie on the Vacuolar side of the membrane; that stretch reads NNLDLTIELP…YFFSSPISAL (309 aa). The N-linked (GlcNAc...) asparagine glycan is linked to asparagine 163. Positions 177 and 189 each coordinate Zn(2+). The Proton acceptor role is filled by glutamate 222. Positions 223, 248, and 320 each coordinate Zn(2+). Asparagine 354 is a glycosylation site (N-linked (GlcNAc...) asparagine). The chain crosses the membrane as a helical span at residues 380–400; it reads VTINSVLIVLFPILSGPLLFI. Residues 401–411 are Cytoplasmic-facing; the sequence is TVRYKKWKIGT. Residues 412-432 form a helical membrane-spanning segment; sequence SNFLSLPLAIVLTVAIVMIVV. At 433 to 449 the chain is on the vacuolar side; sequence NQGFQIANPFLPSSHPL. Residues 450-470 form a helical membrane-spanning segment; the sequence is LLVATTTSISLLIYYVFLNGV. The Cytoplasmic portion of the chain corresponds to 471–480; that stretch reads NWVSPSGDQK. A helical membrane pass occupies residues 481–501; it reads LITIIEISFIYWLILIYVTHG. At 502–514 the chain is on the vacuolar side; that stretch reads LSQNKIGDDHTGE. The chain crosses the membrane as a helical span at residues 515–535; it reads FPFTVLFFLEATASLFGLIGW. Residues 536-598 are Cytoplasmic-facing; sequence TFSRSIKQSS…FGYDWSLQYL (63 aa). The disordered stretch occupies residues 542 to 570; that stretch reads KQSSNDGSDEPLLTGTAERYGSDDTDEDE. Residues 599 to 619 form a helical membrane-spanning segment; it reads LIVPISSLIIFNSGWLVLDGI. Asparagine 620 is a glycosylation site (N-linked (GlcNAc...) asparagine). Topologically, residues 620 to 631 are vacuolar; the sequence is NKSIQESFAAEN. A helical transmembrane segment spans residues 632-652; sequence LIYLLIQLFSQFWILPILPFV. Residues 653–657 lie on the Cytoplasmic side of the membrane; it reads YKLNR. A helical transmembrane segment spans residues 658–678; sequence FIVFGLTIFAISGVALISFLD. Over 679-930 the chain is Vacuolar; it reads PFNQENPLKL…LVSVSLKIEV (252 aa). N-linked (GlcNAc...) asparagine glycans are attached at residues asparagine 697, asparagine 768, asparagine 808, and asparagine 890.

Belongs to the peptidase M28 family. Zn(2+) is required as a cofactor.

The protein resides in the vacuole membrane. In terms of biological role, may be involved in vacuolar sorting and osmoregulation. The polypeptide is Vacuolar membrane protease (Candida dubliniensis (strain CD36 / ATCC MYA-646 / CBS 7987 / NCPF 3949 / NRRL Y-17841) (Yeast)).